Reading from the N-terminus, the 703-residue chain is Protein CNGC15c (703 aa).

Residues 1 to 10 (MGFDNPRSER) are compositionally biased toward basic and acidic residues. The segment at 1–23 (MGFDNPRSERFEDDPEISKIPTT) is disordered. A run of 5 helical transmembrane segments spans residues 91–111 (IFLVACLVSLFVDPLFFYLPV), 179–199 (GFWLDFIAALPLPQVLIWIII), 216–236 (FFIIFQYIPRLYLIFPLSSQI), 255–275 (LMLYMLASHILGACWYLLSIE), and 372–392 (FIGEIMVAIVVATLGLVLFAL). 480 to 565 (LFDQMDERML…WALDPRPSVI (86 aa)) lines the a nucleoside 3',5'-cyclic phosphate pocket. Residues 616–644 (RTWAACFIQAAWRRHKKRKEAAELRAKEN) enclose the IQ domain. Positions 676 to 703 (KGVNMHSGTNSGVVSSLQKPTEPDFSDE) are disordered. Residues 681-694 (HSGTNSGVVSSLQK) show a composition bias toward polar residues.

Belongs to the cyclic nucleotide-gated cation channel (TC 1.A.1.5) family. As to quaternary structure, interacts (via N-terminus) with DMI1 (via c-terminus). The Nod factor has no effect on this interaction, implying that the complex is maintained after activation. Expressed in roots, stems, leaves, flowers and pods.

It is found in the nucleus membrane. Its function is as follows. Cyclic nucleotide-gated channel involved in the establishment of both rhizobial and mycorrhizal associations. Required for full activation of nuclear-localized Ca(2+) oscillations by Nod and Myc factors. Simultaneous activation of the K(+)-permeable channel DMI1 and the Ca(2+) channel CNGC15 can give rise to sustained Ca(2+) oscillations. May function during fertilization in both female and male gametophytic Ca(2+) signaling. The polypeptide is Protein CNGC15c (Medicago truncatula (Barrel medic)).